The primary structure comprises 165 residues: Peptide deformylase (165 aa).

Cys93 and His135 together coordinate Fe cation. Residue Glu136 is part of the active site. His139 contributes to the Fe cation binding site.

The protein belongs to the polypeptide deformylase family. Fe(2+) is required as a cofactor.

It carries out the reaction N-terminal N-formyl-L-methionyl-[peptide] + H2O = N-terminal L-methionyl-[peptide] + formate. Removes the formyl group from the N-terminal Met of newly synthesized proteins. Requires at least a dipeptide for an efficient rate of reaction. N-terminal L-methionine is a prerequisite for activity but the enzyme has broad specificity at other positions. The chain is Peptide deformylase from Thermodesulfovibrio yellowstonii (strain ATCC 51303 / DSM 11347 / YP87).